Consider the following 237-residue polypeptide: Orotidine 5'-phosphate decarboxylase (237 aa).

Residues Asp-11, Lys-34, 61 to 70 (DLKLHDIPNT), Thr-123, Arg-185, Gln-194, Gly-214, and Arg-215 contribute to the substrate site. Residue Lys-63 is the Proton donor of the active site.

This sequence belongs to the OMP decarboxylase family. Type 1 subfamily. In terms of assembly, homodimer.

It carries out the reaction orotidine 5'-phosphate + H(+) = UMP + CO2. Its pathway is pyrimidine metabolism; UMP biosynthesis via de novo pathway; UMP from orotate: step 2/2. Its function is as follows. Catalyzes the decarboxylation of orotidine 5'-monophosphate (OMP) to uridine 5'-monophosphate (UMP). The sequence is that of Orotidine 5'-phosphate decarboxylase from Ligilactobacillus salivarius (strain UCC118) (Lactobacillus salivarius).